Reading from the N-terminus, the 274-residue chain is Large ribosomal subunit protein uL2cz/uL2cy (274 aa).

Disordered stretches follow at residues 1 to 22 (MAIH…DSQV) and 223 to 274 (MNPV…RRTK).

The protein belongs to the universal ribosomal protein uL2 family. In terms of assembly, part of the 50S ribosomal subunit.

The protein localises to the plastid. It is found in the chloroplast. The chain is Large ribosomal subunit protein uL2cz/uL2cy (rpl2-A) from Phaseolus vulgaris (Kidney bean).